The sequence spans 209 residues: SelT-like protein (209 aa).

Positions Met-1–Asn-22 are cleaved as a signal peptide. Cys-64 and Cys-67 are oxidised to a cystine.

It belongs to the SelWTH family. SELT subfamily.

The polypeptide is SelT-like protein (Arabidopsis thaliana (Mouse-ear cress)).